The sequence spans 59 residues: Antibacterial peptide enbocin (59 aa).

A signal peptide spans 1–20 (MNFTRIIFFLFVVVFATASG). Lysine 21 is a propeptide. Serine 58 carries the post-translational modification Serine amide.

Belongs to the cecropin family.

The protein resides in the secreted. Its function is as follows. Has antibacterial activity against Gram-positive and Gram-negative bacteria. The chain is Antibacterial peptide enbocin from Bombyx mori (Silk moth).